A 297-amino-acid chain; its full sequence is Probable endonuclease 4 (297 aa).

The Zn(2+) site is built by His-69, His-110, Glu-145, Asp-179, His-182, His-214, Asp-227, His-229, and Glu-259.

The protein belongs to the AP endonuclease 2 family. Requires Zn(2+) as cofactor.

It carries out the reaction Endonucleolytic cleavage to 5'-phosphooligonucleotide end-products.. In terms of biological role, endonuclease IV plays a role in DNA repair. It cleaves phosphodiester bonds at apurinic or apyrimidinic (AP) sites, generating a 3'-hydroxyl group and a 5'-terminal sugar phosphate. The sequence is that of Probable endonuclease 4 from Listeria monocytogenes serotype 4b (strain CLIP80459).